The chain runs to 104 residues: Type VII secretion system extracellular protein B (104 aa).

Belongs to the WXG100 family. In terms of assembly, homodimer. When mixed with EsxA does not form heterodimers.

It is found in the secreted. Virulence factor that is important for the establishment of infection in the host. EsxB is required for EsxA synthesis as well as secretion. Mediates together with EsxA the release of S.aureus from the host cell. Also inhibits host cytokine production and thus modulates dendritic cell-mediated immunity. The polypeptide is Type VII secretion system extracellular protein B (Staphylococcus aureus (strain MSSA476)).